The sequence spans 700 residues: Pentatricopeptide repeat-containing protein At3g26540 (700 aa).

PPR repeat units lie at residues 95–125 (PIFL…MPER), 126–160 (DGGS…GVRA), 161–195 (TETS…GYSG), 196–226 (NVDL…IVNP), 227–261 (SDVS…NVRP), 262–296 (LNHT…SVVA), 297–327 (DTVV…TRSK), 328–362 (DLKS…NIVS), 363–389 (WNAM…MRQE), 394–428 (DNVT…GYDT), 429–459 (NVIV…MSEL), 461–495 (DEVS…AKPS), 497–529 (YTLA…GYKI), 530–560 (DVVI…AATR), 561–595 (DLIL…GVKP), 596–626 (DHVT…MSTK), and 632–662 (QVEH…MPFD).

It belongs to the PPR family. PCMP-A subfamily.

This is Pentatricopeptide repeat-containing protein At3g26540 (PCMP-A5) from Arabidopsis thaliana (Mouse-ear cress).